The chain runs to 280 residues: Ataxin-3 homolog (280 aa).

Positions 7–187 (GGMLYHEVQE…QECPMSSSSE (181 aa)) constitute a Josephin domain. C20 (nucleophile) is an active-site residue. H126 serves as the catalytic Proton acceptor. The active site involves D141. 2 stretches are compositionally biased toward polar residues: residues 183–194 (SSSSEASNSFGQ) and 221–232 (DNVNQQRRNQAL). The tract at residues 183 to 240 (SSSSEASNSFGQWLSPEDAERIRKNTSSGSSARNKRSNDNVNQQRRNQALSREEVQAF) is disordered. The region spanning 243–262 (MEDDDLKAAIAASLLDASAA) is the UIM domain.

The protein localises to the nucleus. The catalysed reaction is Thiol-dependent hydrolysis of ester, thioester, amide, peptide and isopeptide bonds formed by the C-terminal Gly of ubiquitin (a 76-residue protein attached to proteins as an intracellular targeting signal).. Functionally, interacts with key regulators of transcription and represses transcription. Acts as a histone-binding protein that regulates transcription. Acts as a deubiquitinating enzyme. This Arabidopsis thaliana (Mouse-ear cress) protein is Ataxin-3 homolog.